We begin with the raw amino-acid sequence, 252 residues long: Adenosylcobinamide-GDP ribazoletransferase (252 aa).

Transmembrane regions (helical) follow at residues 34–54, 55–75, 113–133, 138–158, 174–194, 198–218, and 230–250; these read GASFMPLVGVIVGGIQWIIYK, LCIIIFSLNVSIVIVILAGIV, YACLAIIIDILLKYSFFCSIV, LIIIIAPVMSRFSIVFIAFIG, IGKWQLFWAAFITVITLFFLM, FIYVIILIFAGLFMSFLFNVF, and LLGANNEIVEILTMVMLCVII.

Belongs to the CobS family. Mg(2+) is required as a cofactor.

Its subcellular location is the cell membrane. It carries out the reaction alpha-ribazole + adenosylcob(III)inamide-GDP = adenosylcob(III)alamin + GMP + H(+). The catalysed reaction is alpha-ribazole 5'-phosphate + adenosylcob(III)inamide-GDP = adenosylcob(III)alamin 5'-phosphate + GMP + H(+). The protein operates within cofactor biosynthesis; adenosylcobalamin biosynthesis; adenosylcobalamin from cob(II)yrinate a,c-diamide: step 7/7. Its function is as follows. Joins adenosylcobinamide-GDP and alpha-ribazole to generate adenosylcobalamin (Ado-cobalamin). Also synthesizes adenosylcobalamin 5'-phosphate from adenosylcobinamide-GDP and alpha-ribazole 5'-phosphate. In Clostridium kluyveri (strain NBRC 12016), this protein is Adenosylcobinamide-GDP ribazoletransferase.